A 106-amino-acid chain; its full sequence is UPF0060 membrane protein Bphy_5052 (106 aa).

Helical transmembrane passes span L4 to W24, S30 to F50, V58 to D78, and P82 to F102.

It belongs to the UPF0060 family.

Its subcellular location is the cell inner membrane. The polypeptide is UPF0060 membrane protein Bphy_5052 (Paraburkholderia phymatum (strain DSM 17167 / CIP 108236 / LMG 21445 / STM815) (Burkholderia phymatum)).